The primary structure comprises 634 residues: Nucleoside triphosphatase I (634 aa).

The 163-residue stretch at 41–203 (FLGLDSMNSL…ALLVNLLRPG (163 aa)) folds into the Helicase ATP-binding domain. Residue 54-61 (QETGVGKT) participates in ATP binding. The DEXH box motif lies at 140–143 (DECH). The Helicase C-terminal domain maps to 355-531 (SLYQALYEHS…EFSQLYRVLK (177 aa)). The segment at 456-523 (DIFILDMTWN…EIIQNKAREF (68 aa)) is binding to the cap-specific mRNA (nucleoside-2'-O-)-methyltransferase.

Belongs to the helicase family. NPH I subfamily. As to quaternary structure, monomer. Interacts (via C-terminus) with RAP94 (via N-terminus). Interacts with the cap-specific mRNA (nucleoside-2'-O-)-methyltransferase.

The protein resides in the virion. The enzyme catalyses a ribonucleoside 5'-triphosphate + H2O = a ribonucleoside 5'-diphosphate + phosphate + H(+). Its function is as follows. DNA-dependent ATPase required for providing the needed energy to achieve the termination of early transcripts. Acts in concert with the RAP94 subunit of the virion RNA polymerase and the capping enzyme/VTF to catalyze release of UUUUUNU-containing nascent RNA from the elongation complex. NPH-I must bind ssDNA in order to exhibit ATPase activity. This chain is Nucleoside triphosphatase I (NPH1), found in Homo sapiens (Human).